The following is a 51-amino-acid chain: Defensin (51 aa).

3 disulfides stabilise this stretch: Cys-3-Cys-31, Cys-17-Cys-36, and Cys-21-Cys-38. A Phenylalanine amide modification is found at Phe-51.

The protein localises to the secreted. Functionally, antibacterial peptide against Gram-positive and Gram-negative bacteria and fungi. In Bombus pascuorum (Common carder bumblebee), this protein is Defensin.